The primary structure comprises 710 residues: Iron-sulfur clusters transporter ATM1, mitochondrial (710 aa).

The N-terminal 38 residues, 1–38 (MWLSLPRSGYGSVATLTSKRVLACLTPLRQFSTSPAVS), are a transit peptide targeting the mitochondrion. Polar residues predominate over residues 35 to 52 (PAVSNANHKNVDNINKSP). The interval 35–83 (PAVSNANHKNVDNINKSPANDAANNAVEKGDKPTTSPEKLATKAEKSSA) is disordered. At 39 to 129 (NANHKNVDNI…PKGKTSVKFR (91 aa)) the chain is on the mitochondrial matrix side. Residues 130–151 (VLVAVALLVGAKLLNVQVPFFF) traverse the membrane as a helical segment. Positions 130-419 (VLVAVALLVG…LGSVYRDLRQ (290 aa)) constitute an ABC transmembrane type-1 domain. Residues 152–173 (KEIIDDMNIEWNSATALGVGIT) lie on the Mitochondrial intermembrane side of the membrane. A helical membrane pass occupies residues 174–197 (ALIFSYGAARFGAVLFGELRNAIF). The Mitochondrial matrix portion of the chain corresponds to 198-246 (ASVAQKAIKEVATNVFRHLLKLDMAFHLSRQTGGITRAIDRGTKGISFV). A helical transmembrane segment spans residues 247 to 270 (LSSMVFHIIPIALEISLVCGILSY). A topological domain (mitochondrial intermembrane) is located at residue N271. A helical transmembrane segment spans residues 272–292 (FGWKYALVTGATMVSYAIFTI). The Mitochondrial matrix portion of the chain corresponds to 293-358 (TTTSWRTKFR…ASIKIATSLA (66 aa)). Residues 298 to 302 (RTKFR) and 361 to 364 (NSGQ) each bind glutathione. Residues 359 to 377 (FLNSGQNLIFSSALTAMMY) traverse the membrane as a helical segment. Topologically, residues 378 to 392 (MTCCGVADGSLTVGD) are mitochondrial intermembrane. Residues 393-414 (LVLVNQLVFQLSVPLNFLGSVY) form a helical membrane-spanning segment. G411 serves as a coordination point for glutathione. The Mitochondrial matrix segment spans residues 415 to 710 (RDLRQSLLDM…AEEKAAKKDV (296 aa)). Residues 453–687 (IRFENVTYGY…DGLYKSMWDA (235 aa)) enclose the ABC transporter domain. ATP contacts are provided by residues Y462 and 486–497 (GPSGSGKSTILK).

It belongs to the ABC transporter superfamily. ABCB family. Heavy Metal importer (TC 3.A.1.210) subfamily. As to quaternary structure, homodimer.

Its subcellular location is the mitochondrion inner membrane. In terms of biological role, performs an essential function in the generation of cytoplasmic iron-sulfur proteins by mediating the ATP-dependent export of Fe/S cluster precursors synthesized by NFS1 and other mitochondrial proteins. Hydrolyzes ATP. Binds glutathione and may function by transporting a glutathione-conjugated iron-sulfur compound. The protein is Iron-sulfur clusters transporter ATM1, mitochondrial of Yarrowia lipolytica (strain CLIB 122 / E 150) (Yeast).